Consider the following 205-residue polypeptide: MTRPYAPGYRIPTDLLLKAYASGVFPMAESASDPEVFWVRPETRGIIPLDGFHTPKSLRKTIRKSLFDIRFDFDFEATIDGCAEKREERRSTWINAPIREAYVQLHRMGHCHSVEAWREDQLVGGLYGVSLGRVFFGESMFSKETDASKICLVHLVERLKARGFALLDTQFTTEHLKRFGAVDVPRGKYEKMLAEALKGEAIFFP.

This sequence belongs to the L/F-transferase family.

It localises to the cytoplasm. The enzyme catalyses N-terminal L-lysyl-[protein] + L-leucyl-tRNA(Leu) = N-terminal L-leucyl-L-lysyl-[protein] + tRNA(Leu) + H(+). The catalysed reaction is N-terminal L-arginyl-[protein] + L-leucyl-tRNA(Leu) = N-terminal L-leucyl-L-arginyl-[protein] + tRNA(Leu) + H(+). It catalyses the reaction L-phenylalanyl-tRNA(Phe) + an N-terminal L-alpha-aminoacyl-[protein] = an N-terminal L-phenylalanyl-L-alpha-aminoacyl-[protein] + tRNA(Phe). Its function is as follows. Functions in the N-end rule pathway of protein degradation where it conjugates Leu, Phe and, less efficiently, Met from aminoacyl-tRNAs to the N-termini of proteins containing an N-terminal arginine or lysine. The protein is Leucyl/phenylalanyl-tRNA--protein transferase of Mesorhizobium japonicum (strain LMG 29417 / CECT 9101 / MAFF 303099) (Mesorhizobium loti (strain MAFF 303099)).